A 790-amino-acid chain; its full sequence is DNA topoisomerase 1 (790 aa).

3 stretches are compositionally biased toward polar residues: residues 1–18 (MKSN…SNVM), 44–54 (KLSSGALNGNS), and 61–70 (SNLSCPSPYT). The interval 1–196 (MKSNPGITVI…KKRPDVSASV (196 aa)) is disordered. Positions 158-167 (QEEAAADDDP) are enriched in acidic residues. Residues 168–181 (SISNRNKKSTTPAS) are compositionally biased toward polar residues. 3 interaction with DNA regions span residues 426–427 (KY), 490–495 (RAGNEK), and 581–583 (TAK). The 358-residue stretch at 433–790 (SSSLKGKVTR…AMDVVLIFRF (358 aa)) folds into the Topo IB-type catalytic domain. Tyrosine 749 (O-(3'-phospho-DNA)-tyrosine intermediate) is an active-site residue.

The protein belongs to the type IB topoisomerase family.

The protein resides in the nucleus. It catalyses the reaction ATP-independent breakage of single-stranded DNA, followed by passage and rejoining.. Releases the supercoiling and torsional tension of DNA introduced during the DNA replication and transcription by transiently cleaving and rejoining one strand of the DNA duplex. Introduces a single-strand break via transesterification at a target site in duplex DNA. The scissile phosphodiester is attacked by the catalytic tyrosine of the enzyme, resulting in the formation of a DNA-(3'-phosphotyrosyl)-enzyme intermediate and the expulsion of a 5'-OH DNA strand. The free DNA strand then rotates around the intact phosphodiester bond on the opposing strand, thus removing DNA supercoils. Finally, in the religation step, the DNA 5'-OH attacks the covalent intermediate to expel the active-site tyrosine and restore the DNA phosphodiester backbone. The protein is DNA topoisomerase 1 (TOP1) of Daucus carota (Wild carrot).